An 84-amino-acid chain; its full sequence is Small ribosomal subunit protein bS20 (84 aa).

The protein belongs to the bacterial ribosomal protein bS20 family.

In terms of biological role, binds directly to 16S ribosomal RNA. This Lactiplantibacillus plantarum (strain ATCC BAA-793 / NCIMB 8826 / WCFS1) (Lactobacillus plantarum) protein is Small ribosomal subunit protein bS20.